A 2026-amino-acid chain; its full sequence is E3 ubiquitin-protein ligase TRIP12 (2026 aa).

Polar residues-rich tracts occupy residues 1–10 (MSNRPNSNPG), 32–42 (GRNSLSLSVGS), and 73–84 (SSVSEPNITFSP). Positions 1–437 (MSNRPNSNPG…SGESESDDSE (437 aa)) are disordered. Low complexity-rich tracts occupy residues 94–112 (SSHF…AISP), 135–161 (AEPA…STPS), 171–188 (LLSS…SAAG), and 199–241 (AAKP…SSAA). The segment covering 359–371 (QKTTGSCASTSRR) has biased composition (polar residues). Basic and acidic residues predominate over residues 379 to 391 (GAAEARRQEKMAD). Over residues 392-404 (SDNNQDGANSSAA) the composition is skewed to polar residues. The segment covering 412-430 (GASASSSVAGAVGMTTSGE) has biased composition (low complexity). In terms of domain architecture, WWE spans 789-876 (MLKKGSAQTT…DPELAKCFIK (88 aa)). Disordered regions lie at residues 1008–1123 (SNVT…SVSN) and 1441–1470 (GCKD…KQDE). The segment covering 1040-1053 (KRKRLPKRGPRRPK) has biased composition (basic residues). The span at 1056–1065 (PPRDDDKVDN) shows a compositional bias: basic and acidic residues. Residues 1068–1079 (KSPTTTQSPKSS) show a composition bias toward low complexity. Positions 1094–1104 (TQANSANSEPS) are enriched in polar residues. The segment at 1530–1604 (EIIPTGEFIN…AMQRLLDTNP (75 aa)) is K-box. An HECT domain is found at 1919–2026 (PDHGYTHDSR…REGQQSFHLS (108 aa)). Catalysis depends on cysteine 1993, which acts as the Glycyl thioester intermediate.

The protein belongs to the UPL family. K-HECT subfamily.

The protein resides in the nucleus. The protein localises to the nucleoplasm. The catalysed reaction is S-ubiquitinyl-[E2 ubiquitin-conjugating enzyme]-L-cysteine + [acceptor protein]-L-lysine = [E2 ubiquitin-conjugating enzyme]-L-cysteine + N(6)-ubiquitinyl-[acceptor protein]-L-lysine.. Its pathway is protein modification; protein ubiquitination. In terms of biological role, E3 ubiquitin-protein ligase involved in ubiquitin fusion degradation (UFD) pathway and regulation of DNA repair. Part of the ubiquitin fusion degradation (UFD) pathway, a process that mediates ubiquitination of protein at their N-terminus, regardless of the presence of lysine residues in target proteins. Acts as a key regulator of DNA damage response by acting as a suppressor of RNF168, an E3 ubiquitin-protein ligase that promotes accumulation of 'Lys-63'-linked histone H2A and H2AX at DNA damage sites, thereby acting as a guard against excessive spreading of ubiquitinated chromatin at damaged chromosomes. The protein is E3 ubiquitin-protein ligase TRIP12 (trip12) of Danio rerio (Zebrafish).